Here is a 460-residue protein sequence, read N- to C-terminus: tRNA modification GTPase MnmE (460 aa).

(6S)-5-formyl-5,6,7,8-tetrahydrofolate-binding residues include R29, E91, and K132. The 157-residue stretch at 227–383 (GISIALIGKT…LIDTIIKKCG (157 aa)) folds into the TrmE-type G domain. N237 contacts K(+). GTP is bound by residues 237-242 (NVGKSS), 256-262 (TNIPGTT), and 281-284 (DTAG). S241 lines the Mg(2+) pocket. K(+)-binding residues include T256, I258, and T261. T262 contacts Mg(2+). K460 contributes to the (6S)-5-formyl-5,6,7,8-tetrahydrofolate binding site.

It belongs to the TRAFAC class TrmE-Era-EngA-EngB-Septin-like GTPase superfamily. TrmE GTPase family. As to quaternary structure, homodimer. Heterotetramer of two MnmE and two MnmG subunits. It depends on K(+) as a cofactor.

Its subcellular location is the cytoplasm. Exhibits a very high intrinsic GTPase hydrolysis rate. Involved in the addition of a carboxymethylaminomethyl (cmnm) group at the wobble position (U34) of certain tRNAs, forming tRNA-cmnm(5)s(2)U34. In Prochlorococcus marinus (strain MIT 9312), this protein is tRNA modification GTPase MnmE.